Here is a 1030-residue protein sequence, read N- to C-terminus: Tricorn protease (1030 aa).

Residues 1-270 are six-bladed beta propeller; the sequence is MANLLQNPDI…DNVKSLDIGP (270 aa). The interval 93–94 is binds the substrate's C-terminus; the sequence is RR. The interval 286–635 is seven-bladed beta propeller; it reads LEDFSMSPGD…EEEKSLNIDA (350 aa). Residues 641–712 are C-1; sequence NVKEDFAEMY…RTSHSYEMGG (72 aa). His706 serves as the catalytic Charge relay system. Positions 721 to 816 are PDZ-like; that stretch reads RAGRIACDFK…SGFVDVLQDD (96 aa). The tract at residues 817 to 1022 is C-2; the sequence is RYIRYRAWVE…IEMVLADLEK (206 aa). A substrate-binding site is contributed by 877-879; the sequence is GGG. The Nucleophile role is filled by Ser926. 954 to 956 is a binding site for substrate; the sequence is GIS. Glu984 (charge relay system) is an active-site residue.

The protein belongs to the peptidase S41B family. Part of the tricorn proteolytic complex.

It localises to the cytoplasm. Tricorn degrades oligopeptides in a sequential manner. This Thermoplasma volcanium (strain ATCC 51530 / DSM 4299 / JCM 9571 / NBRC 15438 / GSS1) protein is Tricorn protease (tri).